We begin with the raw amino-acid sequence, 353 residues long: Nucleotide-binding protein sce5766 (353 aa).

27-34 (GLSGAGKS) serves as a coordination point for ATP. Position 76-79 (76-79 (DVRV)) interacts with GTP. The segment at 310–353 (SGVPSGVGEGMAGAPGVDLRLAQPGATPSEPRPASDTSVTGGER) is disordered. Residues 344 to 353 (SDTSVTGGER) show a composition bias toward polar residues.

This sequence belongs to the RapZ-like family.

Its function is as follows. Displays ATPase and GTPase activities. The protein is Nucleotide-binding protein sce5766 of Sorangium cellulosum (strain So ce56) (Polyangium cellulosum (strain So ce56)).